We begin with the raw amino-acid sequence, 120 residues long: Large ribosomal subunit protein bL19 (120 aa).

This sequence belongs to the bacterial ribosomal protein bL19 family.

Its function is as follows. This protein is located at the 30S-50S ribosomal subunit interface and may play a role in the structure and function of the aminoacyl-tRNA binding site. This is Large ribosomal subunit protein bL19 from Chlorobium limicola (strain DSM 245 / NBRC 103803 / 6330).